The following is a 600-amino-acid chain: Elongation factor 4 (600 aa).

One can recognise a tr-type G domain in the interval 4–187 (KYIRNFSIVA…AIIEQIPPPL (184 aa)). GTP-binding positions include 16–21 (DHGKST) and 134–137 (NKID).

The protein belongs to the TRAFAC class translation factor GTPase superfamily. Classic translation factor GTPase family. LepA subfamily.

It is found in the cell membrane. The catalysed reaction is GTP + H2O = GDP + phosphate + H(+). Functionally, required for accurate and efficient protein synthesis under certain stress conditions. May act as a fidelity factor of the translation reaction, by catalyzing a one-codon backward translocation of tRNAs on improperly translocated ribosomes. Back-translocation proceeds from a post-translocation (POST) complex to a pre-translocation (PRE) complex, thus giving elongation factor G a second chance to translocate the tRNAs correctly. Binds to ribosomes in a GTP-dependent manner. The chain is Elongation factor 4 from Malacoplasma penetrans (strain HF-2) (Mycoplasma penetrans).